Consider the following 132-residue polypeptide: Small ribosomal subunit protein uS8 (132 aa).

This sequence belongs to the universal ribosomal protein uS8 family. In terms of assembly, part of the 30S ribosomal subunit. Contacts proteins S5 and S12.

One of the primary rRNA binding proteins, it binds directly to 16S rRNA central domain where it helps coordinate assembly of the platform of the 30S subunit. The sequence is that of Small ribosomal subunit protein uS8 from Kocuria rhizophila (strain ATCC 9341 / DSM 348 / NBRC 103217 / DC2201).